Here is a 263-residue protein sequence, read N- to C-terminus: 3-deoxy-manno-octulosonate cytidylyltransferase (263 aa).

The protein belongs to the KdsB family.

It is found in the cytoplasm. The catalysed reaction is 3-deoxy-alpha-D-manno-oct-2-ulosonate + CTP = CMP-3-deoxy-beta-D-manno-octulosonate + diphosphate. It participates in nucleotide-sugar biosynthesis; CMP-3-deoxy-D-manno-octulosonate biosynthesis; CMP-3-deoxy-D-manno-octulosonate from 3-deoxy-D-manno-octulosonate and CTP: step 1/1. Its pathway is bacterial outer membrane biogenesis; lipopolysaccharide biosynthesis. Functionally, activates KDO (a required 8-carbon sugar) for incorporation into bacterial lipopolysaccharide in Gram-negative bacteria. In Burkholderia mallei (strain NCTC 10229), this protein is 3-deoxy-manno-octulosonate cytidylyltransferase.